The following is a 554-amino-acid chain: CTP synthase (554 aa).

The interval 1–265 is amidoligase domain; sequence MTPLIFVTGG…DEIVIDQFKL (265 aa). Ser-13 serves as a coordination point for CTP. UTP is bound at residue Ser-13. ATP is bound by residues 14–19 and Asp-71; that span reads SLGKGI. Positions 71 and 139 each coordinate Mg(2+). CTP-binding positions include 146–148, 186–191, and Lys-222; these read DIE and KTKPTQ. UTP contacts are provided by residues 186-191 and Lys-222; that span reads KTKPTQ. One can recognise a Glutamine amidotransferase type-1 domain in the interval 292 to 545; sequence TIAVVGKYVD…VKASRARKAG (254 aa). Gly-353 contributes to the L-glutamine binding site. The active-site Nucleophile; for glutamine hydrolysis is Cys-380. L-glutamine contacts are provided by residues 381-384, Glu-404, and Arg-471; that span reads YGMQ. Residues His-518 and Glu-520 contribute to the active site.

The protein belongs to the CTP synthase family. In terms of assembly, homotetramer.

The enzyme catalyses UTP + L-glutamine + ATP + H2O = CTP + L-glutamate + ADP + phosphate + 2 H(+). It carries out the reaction L-glutamine + H2O = L-glutamate + NH4(+). It catalyses the reaction UTP + NH4(+) + ATP = CTP + ADP + phosphate + 2 H(+). Its pathway is pyrimidine metabolism; CTP biosynthesis via de novo pathway; CTP from UDP: step 2/2. With respect to regulation, allosterically activated by GTP, when glutamine is the substrate; GTP has no effect on the reaction when ammonia is the substrate. The allosteric effector GTP functions by stabilizing the protein conformation that binds the tetrahedral intermediate(s) formed during glutamine hydrolysis. Inhibited by the product CTP, via allosteric rather than competitive inhibition. In terms of biological role, catalyzes the ATP-dependent amination of UTP to CTP with either L-glutamine or ammonia as the source of nitrogen. Regulates intracellular CTP levels through interactions with the four ribonucleotide triphosphates. In Xylella fastidiosa (strain M23), this protein is CTP synthase.